Reading from the N-terminus, the 677-residue chain is DNA ligase (677 aa).

Residues 34–38 (DAQYD), 84–85 (SL), and glutamate 118 contribute to the NAD(+) site. Residue lysine 120 is the N6-AMP-lysine intermediate of the active site. Residues arginine 141, glutamate 176, lysine 283, and lysine 307 each contribute to the NAD(+) site. The Zn(2+) site is built by cysteine 403, cysteine 406, cysteine 421, and cysteine 427. The 84-residue stretch at 594 to 677 (ETASPISGKT…DLLKTVSNSE (84 aa)) folds into the BRCT domain.

Belongs to the NAD-dependent DNA ligase family. LigA subfamily. Mg(2+) is required as a cofactor. The cofactor is Mn(2+).

The enzyme catalyses NAD(+) + (deoxyribonucleotide)n-3'-hydroxyl + 5'-phospho-(deoxyribonucleotide)m = (deoxyribonucleotide)n+m + AMP + beta-nicotinamide D-nucleotide.. In terms of biological role, DNA ligase that catalyzes the formation of phosphodiester linkages between 5'-phosphoryl and 3'-hydroxyl groups in double-stranded DNA using NAD as a coenzyme and as the energy source for the reaction. It is essential for DNA replication and repair of damaged DNA. The chain is DNA ligase from Anaplasma phagocytophilum (strain HZ).